The following is a 224-amino-acid chain: Thymidylate kinase (224 aa).

Residue 7-14 participates in ATP binding; the sequence is GIEGSGKS.

This sequence belongs to the thymidylate kinase family.

It catalyses the reaction dTMP + ATP = dTDP + ADP. In terms of biological role, phosphorylation of dTMP to form dTDP in both de novo and salvage pathways of dTTP synthesis. The sequence is that of Thymidylate kinase from Nitratidesulfovibrio vulgaris (strain DP4) (Desulfovibrio vulgaris).